A 417-amino-acid chain; its full sequence is MLKKDMNIADYDPELFNAIQNETLRQEEHIELIASENYTSPRVMQAQGSQLTNKYAEGYPGKRYYGGCEYVDVVETLAIERAKQLFGATYANVQPHSGSQANSAVYMALLKPGDTVLGMNLAHGGHLTHGSPVNFSGRLYNIIPYGIDESGKIDYDEMERLAVEHKPKMMIGGFSAYSGIVDWARMREIADKIGAYLFVDMAHVAGLIAAGVYPNPVPHAHVVTSTTHKTLAGPRGGIILSAADDEDLYKKLNSAVFPGGQGGPLMHVIAGKAVAFKEALEPEFKAYQQQVVKNAKAMVEVFLERGYKIVSGGTDNHLMLVDLIGRDLTGKEADAALGSANITVNKNSVPNDPRSPFVTSGVRIGTPAITRRGFKEAEAKELTGWICDILDDAHNPAVIERVKGQVLALCARFPVYG.

(6S)-5,6,7,8-tetrahydrofolate is bound by residues L121 and 125 to 127 (GHL). K229 is modified (N6-(pyridoxal phosphate)lysine). 355–357 (SPF) serves as a coordination point for (6S)-5,6,7,8-tetrahydrofolate.

This sequence belongs to the SHMT family. As to quaternary structure, homodimer. The cofactor is pyridoxal 5'-phosphate.

The protein resides in the cytoplasm. The catalysed reaction is (6R)-5,10-methylene-5,6,7,8-tetrahydrofolate + glycine + H2O = (6S)-5,6,7,8-tetrahydrofolate + L-serine. Its pathway is one-carbon metabolism; tetrahydrofolate interconversion. It participates in amino-acid biosynthesis; glycine biosynthesis; glycine from L-serine: step 1/1. In terms of biological role, catalyzes the reversible interconversion of serine and glycine with tetrahydrofolate (THF) serving as the one-carbon carrier. This reaction serves as the major source of one-carbon groups required for the biosynthesis of purines, thymidylate, methionine, and other important biomolecules. Also exhibits THF-independent aldolase activity toward beta-hydroxyamino acids, producing glycine and aldehydes, via a retro-aldol mechanism. This chain is Serine hydroxymethyltransferase, found in Shewanella sp. (strain MR-4).